The primary structure comprises 273 residues: DnaJ homolog subfamily C member 27 (273 aa).

The required for interaction with MAPK1 stretch occupies residues 1-18 (MEANMPKRKEPGRSLRIK). GTP contacts are provided by residues 23-30 (GNAEVGKS), 71-75 (DMAGH), and 134-137 (NKID). The 57-residue stretch at 217 to 273 (GSWDMLGVKPGASRDEVNKACRKLAVLLHPDKCVAPGSEDAFKAVVNARTALLKNIK) folds into the J domain.

The protein belongs to the small GTPase superfamily. Rab family. As to quaternary structure, interacts directly with MAPK1 (wild-type and kinase-deficient forms). Interacts directly (in GTP-bound form) with MAP2K1 (wild-type and kinase-deficient forms).

It localises to the nucleus. In terms of biological role, GTPase which can activate the MEK/ERK pathway and induce cell transformation when overexpressed. May act as a nuclear scaffold for MAPK1, probably by association with MAPK1 nuclear export signal leading to enhanced ERK1/ERK2 signaling. The protein is DnaJ homolog subfamily C member 27 (DNAJC27) of Pongo abelii (Sumatran orangutan).